Reading from the N-terminus, the 187-residue chain is dTTP/UTP pyrophosphatase (187 aa).

Catalysis depends on D65, which acts as the Proton acceptor.

This sequence belongs to the Maf family. YhdE subfamily. A divalent metal cation serves as cofactor.

The protein localises to the cytoplasm. The catalysed reaction is dTTP + H2O = dTMP + diphosphate + H(+). It catalyses the reaction UTP + H2O = UMP + diphosphate + H(+). Functionally, nucleoside triphosphate pyrophosphatase that hydrolyzes dTTP and UTP. May have a dual role in cell division arrest and in preventing the incorporation of modified nucleotides into cellular nucleic acids. The sequence is that of dTTP/UTP pyrophosphatase from Deinococcus geothermalis (strain DSM 11300 / CIP 105573 / AG-3a).